Reading from the N-terminus, the 188-residue chain is dCTP deaminase (188 aa).

DCTP is bound by residues 111-116 (KSTYAR), 135-137 (TLE), Gln-156, Tyr-170, Lys-179, and Gln-180. The Proton donor/acceptor role is filled by Glu-137.

The protein belongs to the dCTP deaminase family. Homotrimer.

It catalyses the reaction dCTP + H2O + H(+) = dUTP + NH4(+). Its pathway is pyrimidine metabolism; dUMP biosynthesis; dUMP from dCTP (dUTP route): step 1/2. Catalyzes the deamination of dCTP to dUTP. In Rickettsia africae (strain ESF-5), this protein is dCTP deaminase.